Reading from the N-terminus, the 216-residue chain is Octanoyltransferase (216 aa).

In terms of domain architecture, BPL/LPL catalytic spans 29-209 (DRAGECVWLL…SFDAVFGPCP (181 aa)). Residues 68 to 75 (RGGQYTYH), 140 to 142 (AIG), and 153 to 155 (GFA) contribute to the substrate site. Cys-171 (acyl-thioester intermediate) is an active-site residue.

Belongs to the LipB family.

It localises to the cytoplasm. The enzyme catalyses octanoyl-[ACP] + L-lysyl-[protein] = N(6)-octanoyl-L-lysyl-[protein] + holo-[ACP] + H(+). It functions in the pathway protein modification; protein lipoylation via endogenous pathway; protein N(6)-(lipoyl)lysine from octanoyl-[acyl-carrier-protein]: step 1/2. Functionally, catalyzes the transfer of endogenously produced octanoic acid from octanoyl-acyl-carrier-protein onto the lipoyl domains of lipoate-dependent enzymes. Lipoyl-ACP can also act as a substrate although octanoyl-ACP is likely to be the physiological substrate. The chain is Octanoyltransferase from Rhodospirillum rubrum (strain ATCC 11170 / ATH 1.1.1 / DSM 467 / LMG 4362 / NCIMB 8255 / S1).